We begin with the raw amino-acid sequence, 91 residues long: Small ribosomal subunit protein bS16 (91 aa).

This sequence belongs to the bacterial ribosomal protein bS16 family.

This is Small ribosomal subunit protein bS16 from Staphylococcus epidermidis (strain ATCC 35984 / DSM 28319 / BCRC 17069 / CCUG 31568 / BM 3577 / RP62A).